Consider the following 188-residue polypeptide: Adenylate kinase (188 aa).

Residue 10–15 (GCGKGT) participates in ATP binding. An NMP region spans residues 30–59 (STGDMLRHARAAGTELGRRVAAIMDGGNLV). AMP-binding positions include Thr31, Arg36, 57-59 (NLV), 85-88 (GFPR), and Gln92. The segment at 126-136 (KRAEEEGRPDD) is LID. Arg127 is a binding site for ATP. Residues Arg133 and Arg144 each coordinate AMP. Gly172 contributes to the ATP binding site.

It belongs to the adenylate kinase family. In terms of assembly, monomer.

It localises to the cytoplasm. It carries out the reaction AMP + ATP = 2 ADP. Its pathway is purine metabolism; AMP biosynthesis via salvage pathway; AMP from ADP: step 1/1. Its function is as follows. Catalyzes the reversible transfer of the terminal phosphate group between ATP and AMP. Plays an important role in cellular energy homeostasis and in adenine nucleotide metabolism. This Maricaulis maris (strain MCS10) (Caulobacter maris) protein is Adenylate kinase.